A 1132-amino-acid chain; its full sequence is Ubiquitin-associated protein 2 (1132 aa).

A disordered region spans residues Met-1–Lys-29. Positions Asp-8–Pro-17 are enriched in basic and acidic residues. A UBA domain is found at Lys-48–Gly-92. Disordered stretches follow at residues Asp-95–Ser-202, Gly-221–Lys-248, Asn-331–Ser-351, Leu-380–Ser-479, Thr-602–Leu-679, Pro-713–Thr-749, Pro-875–Gly-919, Gly-996–Tyr-1033, Asp-1040–Gly-1059, and Pro-1087–Asn-1132. Over residues Phe-109 to Arg-130 the composition is skewed to basic and acidic residues. Arg-166 carries the post-translational modification Omega-N-methylarginine. The segment covering Lys-168–Gly-182 has biased composition (basic residues). Polar residues-rich tracts occupy residues His-233–Ser-244 and Asn-331–Asn-340. Low complexity predominate over residues Ser-341–Ser-351. Residues Ser-392–Ala-404 show a composition bias toward polar residues. Residues Ser-433 and Ser-440 each carry the phosphoserine modification. Composition is skewed to low complexity over residues Leu-436–Gln-448 and Thr-602–Tyr-618. The span at Asp-619–Gln-630 shows a compositional bias: polar residues. A Phosphoserine modification is found at Ser-631. The segment covering Ser-631–Ala-644 has biased composition (low complexity). The span at Ser-652–Val-662 shows a compositional bias: polar residues. Positions Pro-713–Ser-722 are enriched in low complexity. Residues Gly-723–Thr-742 show a composition bias toward polar residues. The span at Pro-897–Pro-914 shows a compositional bias: low complexity. Over residues Pro-1101–Pro-1115 the composition is skewed to low complexity. Polar residues predominate over residues Lys-1116 to Asn-1132.

In terms of assembly, may interact with ANXA2.

It localises to the nucleus. The protein localises to the chromosome. The protein resides in the cytoplasm. In terms of biological role, recruits the ubiquitination machinery to RNA polymerase II for polyubiquitination, removal and degradation, when the transcription-coupled nucleotide excision repair (TC-NER) machinery fails to resolve DNA damage. May promote the degradation of ANXA2. This is Ubiquitin-associated protein 2 from Mus musculus (Mouse).